The sequence spans 136 residues: Large ribosomal subunit protein uL22 (136 aa).

This sequence belongs to the universal ribosomal protein uL22 family. Part of the 50S ribosomal subunit.

Functionally, this protein binds specifically to 23S rRNA; its binding is stimulated by other ribosomal proteins, e.g. L4, L17, and L20. It is important during the early stages of 50S assembly. It makes multiple contacts with different domains of the 23S rRNA in the assembled 50S subunit and ribosome. In terms of biological role, the globular domain of the protein is located near the polypeptide exit tunnel on the outside of the subunit, while an extended beta-hairpin is found that lines the wall of the exit tunnel in the center of the 70S ribosome. This chain is Large ribosomal subunit protein uL22, found in Bacteroides fragilis (strain YCH46).